Here is a 618-residue protein sequence, read N- to C-terminus: 1-deoxy-D-xylulose-5-phosphate synthase (618 aa).

Thiamine diphosphate is bound by residues histidine 76 and 117–119; that span reads GHS. Residue aspartate 148 coordinates Mg(2+). Thiamine diphosphate is bound by residues 149–150, asparagine 177, tyrosine 284, and glutamate 364; that span reads GA. Residue asparagine 177 coordinates Mg(2+).

Belongs to the transketolase family. DXPS subfamily. As to quaternary structure, homodimer. Requires Mg(2+) as cofactor. The cofactor is thiamine diphosphate.

It carries out the reaction D-glyceraldehyde 3-phosphate + pyruvate + H(+) = 1-deoxy-D-xylulose 5-phosphate + CO2. It participates in metabolic intermediate biosynthesis; 1-deoxy-D-xylulose 5-phosphate biosynthesis; 1-deoxy-D-xylulose 5-phosphate from D-glyceraldehyde 3-phosphate and pyruvate: step 1/1. In terms of biological role, catalyzes the acyloin condensation reaction between C atoms 2 and 3 of pyruvate and glyceraldehyde 3-phosphate to yield 1-deoxy-D-xylulose-5-phosphate (DXP). This Francisella philomiragia subsp. philomiragia (strain ATCC 25017 / CCUG 19701 / FSC 153 / O#319-036) protein is 1-deoxy-D-xylulose-5-phosphate synthase.